Reading from the N-terminus, the 243-residue chain is I/6 autoantigen (243 aa).

Positions 110-145 (LSVEEVDALFNALDSDNRGYVSVDEFMDALYGEEGR) constitute an EF-hand domain. A disordered region spans residues 166–243 (PSWRMRPTPK…PPKQKAGCGC (78 aa)). The segment covering 176-196 (PTRKLRQKRKREQGQKRKQGQ) has biased composition (basic residues). 6 tandem repeats follow at residues 181 to 188 (RQKRKREQ), 189 to 196 (GQKRKQGQ), 197 to 204 (RQKQEQGQ), 205 to 212 (RQKREQGQ), 213 to 220 (RQKQEQGQ), and 221 to 228 (KRKRERGG). The interval 181–228 (RQKRKREQGQKRKQGQRQKQEQGQRQKREQGQRQKQEQGQKRKRERGG) is 6 X 8 AA tandem repeats. Over residues 198–220 (QKQEQGQRQKREQGQRQKQEQGQ) the composition is skewed to basic and acidic residues.

It is found in the cytoplasm. The protein resides in the cytoskeleton. Its function is as follows. Microtubule-associated protein that may be involved in cross-linking microtubules. In Trypanosoma brucei brucei, this protein is I/6 autoantigen.